The following is a 185-amino-acid chain: Ribosome-recycling factor (185 aa).

It belongs to the RRF family.

Its subcellular location is the cytoplasm. In terms of biological role, responsible for the release of ribosomes from messenger RNA at the termination of protein biosynthesis. May increase the efficiency of translation by recycling ribosomes from one round of translation to another. The protein is Ribosome-recycling factor of Dehalococcoides mccartyi (strain ATCC BAA-2266 / KCTC 15142 / 195) (Dehalococcoides ethenogenes (strain 195)).